The primary structure comprises 456 residues: Histidine--tRNA ligase (456 aa).

The protein belongs to the class-II aminoacyl-tRNA synthetase family. In terms of assembly, homodimer.

The protein resides in the cytoplasm. It carries out the reaction tRNA(His) + L-histidine + ATP = L-histidyl-tRNA(His) + AMP + diphosphate + H(+). This Borreliella afzelii (strain PKo) (Borrelia afzelii) protein is Histidine--tRNA ligase.